The chain runs to 163 residues: Peptidyl-prolyl cis-trans isomerase FKBP15-2 (163 aa).

The first 25 residues, M1–A25, serve as a signal peptide directing secretion. The PPIase FKBP-type domain maps to G52–N140. The disordered stretch occupies residues K142–L163. Residues Y149–L163 show a composition bias toward acidic residues. The Prevents secretion from ER signature appears at N160 to L163.

The protein belongs to the FKBP-type PPIase family.

The protein localises to the endoplasmic reticulum lumen. It carries out the reaction [protein]-peptidylproline (omega=180) = [protein]-peptidylproline (omega=0). In terms of biological role, PPIases accelerate the folding of proteins. It catalyzes the cis-trans isomerization of proline imidic peptide bonds in oligopeptides. This Arabidopsis thaliana (Mouse-ear cress) protein is Peptidyl-prolyl cis-trans isomerase FKBP15-2 (FKBP15-2).